We begin with the raw amino-acid sequence, 454 residues long: Chromosomal replication initiator protein DnaA (454 aa).

A domain I, interacts with DnaA modulators region spans residues Met-1 to Tyr-79. The interval Tyr-79 to Ser-117 is domain II. The segment at Asn-118–Ser-334 is domain III, AAA+ region. ATP is bound by residues Gly-162, Gly-164, Lys-165, and Thr-166. The domain IV, binds dsDNA stretch occupies residues Arg-335–Lys-454.

The protein belongs to the DnaA family. In terms of assembly, oligomerizes as a right-handed, spiral filament on DNA at oriC.

It localises to the cytoplasm. In terms of biological role, plays an essential role in the initiation and regulation of chromosomal replication. ATP-DnaA binds to the origin of replication (oriC) to initiate formation of the DNA replication initiation complex once per cell cycle. Binds the DnaA box (a 9 base pair repeat at the origin) and separates the double-stranded (ds)DNA. Forms a right-handed helical filament on oriC DNA; dsDNA binds to the exterior of the filament while single-stranded (ss)DNA is stabiized in the filament's interior. The ATP-DnaA-oriC complex binds and stabilizes one strand of the AT-rich DNA unwinding element (DUE), permitting loading of DNA polymerase. After initiation quickly degrades to an ADP-DnaA complex that is not apt for DNA replication. Binds acidic phospholipids. This chain is Chromosomal replication initiator protein DnaA, found in Buchnera aphidicola subsp. Acyrthosiphon pisum (strain 5A).